A 555-amino-acid polypeptide reads, in one-letter code: Transmembrane protein 87B (555 aa).

Residues 1–42 (MAAACRSEAGLLPSLLCRRPAGAQLLRVALCLLCWVPAAVDA) form the signal peptide. At 43–216 (VPELGLWTRT…HGYISASDWP (174 aa)) the chain is on the lumenal side. N-linked (GlcNAc...) asparagine glycosylation is found at Asn68, Asn160, and Asn198. The helical transmembrane segment at 217 to 237 (LMIFYMVMCIVYILYGVLWLL) threads the bilayer. Residues 238-248 (WSACYWKDILR) are Cytoplasmic-facing. Residues 249-269 (IQFWIAAVIFLGMLEKAVFYS) form a helical membrane-spanning segment. Residues 270-300 (EYQNINSTGLSTQGLLIFAELISAVKRTLAR) lie on the Lumenal side of the membrane. The N-linked (GlcNAc...) asparagine glycan is linked to Asn275. Residues 301–321 (LLVIIVSLGYGIVKPRLGTVM) traverse the membrane as a helical segment. Topologically, residues 322-323 (HR) are cytoplasmic. The chain crosses the membrane as a helical span at residues 324 to 344 (VIGLGLLYLIFAAIEGVMRVI). Residues 345–351 (GGSKHLA) lie on the Lumenal side of the membrane. The chain crosses the membrane as a helical span at residues 352–372 (VVLTDIVLAVIDSIFVWFIFI). At 373 to 394 (SLAQTMKTLRLRKNTVKFSLYR) the chain is on the cytoplasmic side. Residues 395-415 (HFTNTLIFAVLASIVFMVWTT) form a helical membrane-spanning segment. At 416 to 429 (KTFRIAKCQSDWME) the chain is on the lumenal side. The chain crosses the membrane as a helical span at residues 430-450 (LWVDDAFWSFLFSVILIVIMF). Topologically, residues 451–555 (LWRPSANNQR…EKMFSSEKIM (105 aa)) are cytoplasmic. Phosphoserine is present on residues Ser470, Ser497, and Ser534.

The protein belongs to the LU7TM family. TMEM87 subfamily.

It is found in the golgi apparatus membrane. Its function is as follows. May be involved in retrograde transport from endosomes to the trans-Golgi network (TGN). The chain is Transmembrane protein 87B from Mus musculus (Mouse).